We begin with the raw amino-acid sequence, 395 residues long: Protein PIN-LIKES 7 (395 aa).

Residues 1–8 lie on the Lumenal side of the membrane; the sequence is MGFLELLE. Residues 9–29 traverse the membrane as a helical segment; it reads VASMPIVQVLLISVLGAFLAT. The Cytoplasmic segment spans residues 30-45; the sequence is DYCSLLSADTRRSVNK. A helical membrane pass occupies residues 46–66; sequence LVFVVFTPCIMFANLAETVTL. Residues 67 to 73 lie on the Lumenal side of the membrane; that stretch reads QDIISWW. A helical membrane pass occupies residues 74–94; that stretch reads FMPINVGITFLVGGILGWLVV. The Cytoplasmic portion of the chain corresponds to 95 to 106; that stretch reads KLLNPKPQLHGL. Residues 107–127 form a helical membrane-spanning segment; it reads IIATCASGNMGNLMLILVPAI. Residues 128–142 are Lumenal-facing; it reads CDEEGSPFGNRSVCR. A helical transmembrane segment spans residues 143-163; the sequence is SIGLSYASFSMALGGFYIWTY. Residues 164–232 are Cytoplasmic-facing; the sequence is SYQLVRSSAT…KDLLHQILEE (69 aa). A helical membrane pass occupies residues 233–253; it reads LFAPPTIGAILGFVFGATNWL. Residues 254-272 are Lumenal-facing; it reads RNLIIGENAPLRVIQDSVK. The chain crosses the membrane as a helical span at residues 273–293; the sequence is LLGEGTIPCITLILGGNLIQG. The Cytoplasmic portion of the chain corresponds to 294–302; sequence LRSSAVKKS. The helical transmembrane segment at 303–323 threads the bilayer; sequence VIVGVIIVRYILLPVVGVGVV. Residues 324–340 are Lumenal-facing; sequence QLAGNLGYLPPDPLFRY. Residues 341–361 traverse the membrane as a helical segment; sequence VLMLQFALPPAMNISTMAQLF. At 362-369 the chain is on the cytoplasmic side; it reads DVAQDECS. The chain crosses the membrane as a helical span at residues 370-390; that stretch reads VIFLWTYLVASLALTVWSTIF. Over 391-395 the chain is Lumenal; the sequence is LSILS.

It belongs to the auxin efflux carrier (TC 2.A.69.2) family. In terms of tissue distribution, expressed in seedlings, rosette and cauline leaves, stems and flowers.

It is found in the endoplasmic reticulum membrane. In terms of biological role, involved in cellular auxin homeostasis by regulating auxin metabolism. Regulates intracellular auxin accumulation at the endoplasmic reticulum and thus auxin availability for nuclear auxin signaling. The chain is Protein PIN-LIKES 7 from Arabidopsis thaliana (Mouse-ear cress).